The chain runs to 491 residues: Glutamyl-tRNA(Gln) amidotransferase subunit A (491 aa).

Catalysis depends on charge relay system residues lysine 78 and serine 158. Serine 182 functions as the Acyl-ester intermediate in the catalytic mechanism.

This sequence belongs to the amidase family. GatA subfamily. As to quaternary structure, heterotrimer of A, B and C subunits.

The catalysed reaction is L-glutamyl-tRNA(Gln) + L-glutamine + ATP + H2O = L-glutaminyl-tRNA(Gln) + L-glutamate + ADP + phosphate + H(+). Allows the formation of correctly charged Gln-tRNA(Gln) through the transamidation of misacylated Glu-tRNA(Gln) in organisms which lack glutaminyl-tRNA synthetase. The reaction takes place in the presence of glutamine and ATP through an activated gamma-phospho-Glu-tRNA(Gln). The polypeptide is Glutamyl-tRNA(Gln) amidotransferase subunit A (Nitrobacter hamburgensis (strain DSM 10229 / NCIMB 13809 / X14)).